We begin with the raw amino-acid sequence, 154 residues long: Ubiquitin-conjugating enzyme E2 L5 (154 aa).

One can recognise a UBC core domain in the interval 2–149; that stretch reads AASRRLMKEL…AEEFTKKYGE (148 aa). The Glycyl thioester intermediate role is filled by Cys-86.

Belongs to the ubiquitin-conjugating enzyme family.

It catalyses the reaction S-ubiquitinyl-[E1 ubiquitin-activating enzyme]-L-cysteine + [E2 ubiquitin-conjugating enzyme]-L-cysteine = [E1 ubiquitin-activating enzyme]-L-cysteine + S-ubiquitinyl-[E2 ubiquitin-conjugating enzyme]-L-cysteine.. It functions in the pathway protein modification; protein ubiquitination. Catalyzes the covalent attachment of ubiquitin to other proteins. In Homo sapiens (Human), this protein is Ubiquitin-conjugating enzyme E2 L5.